We begin with the raw amino-acid sequence, 247 residues long: Anionic trypsin (247 aa).

Positions 1–15 (MHPLLILAFVGAAVA) are cleaved as a signal peptide. Positions 16–23 (FPSDDDDK) are cleaved as a propeptide — activation peptide. The Peptidase S1 domain maps to 24–244 (IVGGYTCAEN…YVDWIQETIA (221 aa)). 6 disulfides stabilise this stretch: Cys-30/Cys-160, Cys-48/Cys-64, Cys-132/Cys-233, Cys-139/Cys-206, Cys-171/Cys-185, and Cys-196/Cys-220. The active-site Charge relay system is the His-63. Ca(2+)-binding residues include Glu-75, Asn-77, Val-80, and Glu-85. Asp-107 serves as the catalytic Charge relay system. The Charge relay system role is filled by Ser-200.

The protein belongs to the peptidase S1 family. Requires Ca(2+) as cofactor. Post-translationally, not sulfated on tyrosine residue(s).

The protein resides in the secreted. It is found in the extracellular space. The catalysed reaction is Preferential cleavage: Arg-|-Xaa, Lys-|-Xaa.. In Bos taurus (Bovine), this protein is Anionic trypsin.